Consider the following 304-residue polypeptide: Acetaldehyde dehydrogenase 1 (304 aa).

11 to 14 (SGNI) lines the NAD(+) pocket. The active-site Acyl-thioester intermediate is the C130. Residues 161-169 (SVGPGTRAN) and N272 contribute to the NAD(+) site.

Belongs to the acetaldehyde dehydrogenase family.

The catalysed reaction is acetaldehyde + NAD(+) + CoA = acetyl-CoA + NADH + H(+). In Azoarcus sp. (strain BH72), this protein is Acetaldehyde dehydrogenase 1 (lapF).